Consider the following 575-residue polypeptide: Septation ring formation regulator EzrA (575 aa).

Residues 1–8 are Extracellular-facing; the sequence is MSNGQLIY. Residues 9–27 form a helical membrane-spanning segment; that stretch reads LMVAIAVILVLAYVVAIFL. Topologically, residues 28–575 are cytoplasmic; the sequence is RKRNEGRLEA…YEKTRETIRF (548 aa). Coiled coils occupy residues 110 to 191, 265 to 301, 354 to 416, and 456 to 526; these read QIDQ…FVTL, LYEA…LYDI, VRRI…IEKD, and TASN…IQEA.

The protein belongs to the EzrA family.

The protein localises to the cell membrane. In terms of biological role, negative regulator of FtsZ ring formation; modulates the frequency and position of FtsZ ring formation. Inhibits FtsZ ring formation at polar sites. Interacts either with FtsZ or with one of its binding partners to promote depolymerization. The protein is Septation ring formation regulator EzrA of Streptococcus pneumoniae (strain JJA).